The sequence spans 143 residues: Transcriptional regulator MraZ (143 aa).

SpoVT-AbrB domains are found at residues 5–47 and 76–119; these read THHP…PRAE and TDEQ…NAER.

The protein belongs to the MraZ family. Forms oligomers.

The protein resides in the cytoplasm. The protein localises to the nucleoid. In Saccharopolyspora erythraea (strain ATCC 11635 / DSM 40517 / JCM 4748 / NBRC 13426 / NCIMB 8594 / NRRL 2338), this protein is Transcriptional regulator MraZ.